The sequence spans 134 residues: 6,7-dimethyl-8-ribityllumazine synthase (134 aa).

5-amino-6-(D-ribitylamino)uracil is bound by residues phenylalanine 12, 44–46 (VFD), and 68–70 (SVI). Residue 73 to 74 (ET) participates in (2S)-2-hydroxy-3-oxobutyl phosphate binding. The active-site Proton donor is the histidine 76. Residue leucine 101 coordinates 5-amino-6-(D-ribitylamino)uracil. Arginine 116 provides a ligand contact to (2S)-2-hydroxy-3-oxobutyl phosphate.

The protein belongs to the DMRL synthase family.

It catalyses the reaction (2S)-2-hydroxy-3-oxobutyl phosphate + 5-amino-6-(D-ribitylamino)uracil = 6,7-dimethyl-8-(1-D-ribityl)lumazine + phosphate + 2 H2O + H(+). It participates in cofactor biosynthesis; riboflavin biosynthesis; riboflavin from 2-hydroxy-3-oxobutyl phosphate and 5-amino-6-(D-ribitylamino)uracil: step 1/2. In terms of biological role, catalyzes the formation of 6,7-dimethyl-8-ribityllumazine by condensation of 5-amino-6-(D-ribitylamino)uracil with 3,4-dihydroxy-2-butanone 4-phosphate. This is the penultimate step in the biosynthesis of riboflavin. The sequence is that of 6,7-dimethyl-8-ribityllumazine synthase from Methanosarcina mazei (strain ATCC BAA-159 / DSM 3647 / Goe1 / Go1 / JCM 11833 / OCM 88) (Methanosarcina frisia).